A 575-amino-acid polypeptide reads, in one-letter code: Guanine nucleotide-binding protein-like 3-like protein (575 aa).

The segment covering 1 to 30 has biased composition (basic residues); the sequence is MMKLRHKNKKPGKGSKGCKKPAKQNGKKAA. A disordered region spans residues 1–75; the sequence is MMKLRHKNKK…AAREQERHRR (75 aa). The interval 9 to 28 is required for nucleolar localization; the sequence is KKPGKGSKGCKKPAKQNGKK. The span at 42-72 shows a compositional bias: basic and acidic residues; sequence SNDHASREAELKKKRVGEMREKQQAAREQER. Residues 51 to 79 adopt a coiled-coil conformation; that stretch reads ELKKKRVGEMREKQQAAREQERHRRRTIE. The 186-residue stretch at 118-303 folds into the CP-type G domain; the sequence is YKEFHKVVEY…LLDAPGIVPG (186 aa). GTP contacts are provided by residues 166–169, 252–259, and 296–299; these read NKID, GLPNVGKS, and DAPG. Residue lysine 470 forms a Glycyl lysine isopeptide (Lys-Gly) (interchain with G-Cter in SUMO1) linkage.

It belongs to the TRAFAC class YlqF/YawG GTPase family. Interacts with MDM2; this interaction, which occurs in the nucleoplasm, stabilizes MDM2. Indirectly interacts with TP53, via MDM2-binding. Interacts with TERF1; this interaction probably occurs in the nucleoplasm and is increased during mitosis, when the nucleolus is disassembled. This binding may promote TERF1 homodimerization. Interacts with TERT.

The protein localises to the nucleus. Its subcellular location is the nucleolus. Functionally, stabilizes TERF1 telomeric association by preventing TERF1 recruitment by PML. Stabilizes TERF1 protein by preventing its ubiquitination and hence proteasomal degradation. Does so by interfering with TERF1-binding to FBXO4 E3 ubiquitin-protein ligase. Required for cell proliferation. By stabilizing TRF1 protein during mitosis, promotes metaphase-to-anaphase transition. Stabilizes MDM2 protein by preventing its ubiquitination, and hence proteasomal degradation. By acting on MDM2, may affect TP53 activity. Required for normal processing of ribosomal pre-rRNA. Binds GTP. The sequence is that of Guanine nucleotide-binding protein-like 3-like protein (GNL3L) from Bos taurus (Bovine).